A 352-amino-acid chain; its full sequence is Carbohydrate sulfotransferase 11 (352 aa).

Topologically, residues 1-16 (MKPALLEVMRMNRICR) are cytoplasmic. A helical; Signal-anchor for type II membrane protein membrane pass occupies residues 17 to 37 (MVLATCLGSFILVIFYFQSML). Over 38–352 (HPVMRRNPFG…YSVPNYLKLD (315 aa)) the chain is Lumenal. 3'-phosphoadenylyl sulfate-binding positions include 124–130 (PKVACTN) and 186–194 (REPFERLVS). N-linked (GlcNAc...) asparagine glycans are attached at residues Asn205, Asn223, Asn321, and Asn342.

It belongs to the sulfotransferase 2 family. In terms of processing, N-glycosylated; required for activity and stability.

The protein resides in the golgi apparatus membrane. It catalyses the reaction chondroitin beta-D-glucuronate + n 3'-phosphoadenylyl sulfate = chondroitin 4'-sulfate + n adenosine 3',5'-bisphosphate + n H(+). Catalyzes the transfer of sulfate to position 4 of the N-acetylgalactosamine (GalNAc) residue of chondroitin. Chondroitin sulfate constitutes the predominant proteoglycan present in cartilage and is distributed on the surfaces of many cells and extracellular matrices. Can also sulfate Gal residues in desulfated dermatan sulfate. Preferentially sulfates in GlcA-&gt;GalNAc unit than in IdoA-&gt;GalNAc unit. Does not form 4, 6-di-O-sulfated GalNAc when chondroitin sulfate C is used as an acceptor. This Rattus norvegicus (Rat) protein is Carbohydrate sulfotransferase 11 (Chst11).